The following is a 257-amino-acid chain: Ribosomal RNA small subunit methyltransferase J (257 aa).

Residues 107-108 (RD), 123-124 (ER), and D177 each bind S-adenosyl-L-methionine.

Belongs to the methyltransferase superfamily. RsmJ family.

The protein resides in the cytoplasm. The catalysed reaction is guanosine(1516) in 16S rRNA + S-adenosyl-L-methionine = N(2)-methylguanosine(1516) in 16S rRNA + S-adenosyl-L-homocysteine + H(+). In terms of biological role, specifically methylates the guanosine in position 1516 of 16S rRNA. The sequence is that of Ribosomal RNA small subunit methyltransferase J from Haemophilus influenzae (strain PittEE).